We begin with the raw amino-acid sequence, 1355 residues long: DNA-directed RNA polymerase subunit beta' (1355 aa).

Zn(2+) is bound by residues cysteine 219, cysteine 293, cysteine 300, and cysteine 303. A disordered region spans residues 1331-1355 (AEVEVDDEVDDDYEDDDEDDDDYED).

The protein belongs to the RNA polymerase beta' chain family. RpoC2 subfamily. As to quaternary structure, in cyanobacteria the RNAP catalytic core is composed of 2 alpha, 1 beta, 1 beta', 1 gamma and 1 omega subunit. When a sigma factor is associated with the core the holoenzyme is formed, which can initiate transcription. It depends on Zn(2+) as a cofactor.

It carries out the reaction RNA(n) + a ribonucleoside 5'-triphosphate = RNA(n+1) + diphosphate. Its function is as follows. DNA-dependent RNA polymerase catalyzes the transcription of DNA into RNA using the four ribonucleoside triphosphates as substrates. The chain is DNA-directed RNA polymerase subunit beta' from Nostoc sp. (strain PCC 7120 / SAG 25.82 / UTEX 2576).